We begin with the raw amino-acid sequence, 212 residues long: MKQLFRQWYDLSEIKKELTTRNWFPATSGNISIKVSHDPLTFLITASGKDKTKTTPDDFLLVNHQGIPVLETELRPSAETILHTHIYNNTNAGCVLHVHTTDNNVITNLYSDAVTLQNQEIIKALDIWEEGATINIPIIENDAHIPTLGEKFRKHIQGDSGAVLIRNHGITVWGRDSFDAKKRLEAYEFLFQFHIKLLSIQGGVSNGANSYS.

Zn(2+) contacts are provided by His-97 and His-99.

Belongs to the aldolase class II family. MtnB subfamily. As to quaternary structure, homotetramer. Requires Zn(2+) as cofactor.

The catalysed reaction is 5-(methylsulfanyl)-D-ribulose 1-phosphate = 5-methylsulfanyl-2,3-dioxopentyl phosphate + H2O. Its pathway is amino-acid biosynthesis; L-methionine biosynthesis via salvage pathway; L-methionine from S-methyl-5-thio-alpha-D-ribose 1-phosphate: step 2/6. Functionally, catalyzes the dehydration of methylthioribulose-1-phosphate (MTRu-1-P) into 2,3-diketo-5-methylthiopentyl-1-phosphate (DK-MTP-1-P). The protein is Methylthioribulose-1-phosphate dehydratase of Bacillus mycoides (strain KBAB4) (Bacillus weihenstephanensis).